The chain runs to 212 residues: ATP synthase F(0) complex subunit a (212 aa).

Transmembrane regions (helical) follow at residues 3–23 (MMGI…MFTS), 58–78 (WAAM…LGLL), 87–107 (QLSM…LTGL), 128–148 (IPLL…ALGV), 154–174 (LTAG…LMPT), and 179–199 (ALST…VAMI).

This sequence belongs to the ATPase A chain family. Component of the ATP synthase complex composed at least of ATP5F1A/subunit alpha, ATP5F1B/subunit beta, ATP5MC1/subunit c (homooctomer), MT-ATP6/subunit a, MT-ATP8/subunit 8, ATP5ME/subunit e, ATP5MF/subunit f, ATP5MG/subunit g, ATP5MK/subunit k, ATP5MJ/subunit j, ATP5F1C/subunit gamma, ATP5F1D/subunit delta, ATP5F1E/subunit epsilon, ATP5PF/subunit F6, ATP5PB/subunit b, ATP5PD/subunit d, ATP5PO/subunit OSCP. ATP synthase complex consists of a soluble F(1) head domain (subunits alpha(3) and beta(3)) - the catalytic core - and a membrane F(0) domain - the membrane proton channel (subunits c, a, 8, e, f, g, k and j). These two domains are linked by a central stalk (subunits gamma, delta, and epsilon) rotating inside the F1 region and a stationary peripheral stalk (subunits F6, b, d, and OSCP). Interacts with DNAJC30; interaction is direct.

The protein localises to the mitochondrion inner membrane. It catalyses the reaction H(+)(in) = H(+)(out). Functionally, subunit a, of the mitochondrial membrane ATP synthase complex (F(1)F(0) ATP synthase or Complex V) that produces ATP from ADP in the presence of a proton gradient across the membrane which is generated by electron transport complexes of the respiratory chain. ATP synthase complex consist of a soluble F(1) head domain - the catalytic core - and a membrane F(1) domain - the membrane proton channel. These two domains are linked by a central stalk rotating inside the F(1) region and a stationary peripheral stalk. During catalysis, ATP synthesis in the catalytic domain of F(1) is coupled via a rotary mechanism of the central stalk subunits to proton translocation. With the subunit c (ATP5MC1), forms the proton-conducting channel in the F(0) domain, that contains two crucial half-channels (inlet and outlet) that facilitate proton movement from the mitochondrial intermembrane space (IMS) into the matrix. Protons are taken up via the inlet half-channel and released through the outlet half-channel, following a Grotthuss mechanism. The chain is ATP synthase F(0) complex subunit a from Tropidurus montanus (Lizard).